The primary structure comprises 250 residues: 3-deoxy-manno-octulosonate cytidylyltransferase (250 aa).

Belongs to the KdsB family.

The protein resides in the cytoplasm. It catalyses the reaction 3-deoxy-alpha-D-manno-oct-2-ulosonate + CTP = CMP-3-deoxy-beta-D-manno-octulosonate + diphosphate. The protein operates within nucleotide-sugar biosynthesis; CMP-3-deoxy-D-manno-octulosonate biosynthesis; CMP-3-deoxy-D-manno-octulosonate from 3-deoxy-D-manno-octulosonate and CTP: step 1/1. It functions in the pathway bacterial outer membrane biogenesis; lipopolysaccharide biosynthesis. In terms of biological role, activates KDO (a required 8-carbon sugar) for incorporation into bacterial lipopolysaccharide in Gram-negative bacteria. The sequence is that of 3-deoxy-manno-octulosonate cytidylyltransferase from Pectobacterium atrosepticum (strain SCRI 1043 / ATCC BAA-672) (Erwinia carotovora subsp. atroseptica).